Here is a 186-residue protein sequence, read N- to C-terminus: ATP synthase subunit delta (186 aa).

It belongs to the ATPase delta chain family. As to quaternary structure, F-type ATPases have 2 components, F(1) - the catalytic core - and F(0) - the membrane proton channel. F(1) has five subunits: alpha(3), beta(3), gamma(1), delta(1), epsilon(1). CF(0) has four main subunits: a(1), b(1), b'(1) and c(10-14). The alpha and beta chains form an alternating ring which encloses part of the gamma chain. F(1) is attached to F(0) by a central stalk formed by the gamma and epsilon chains, while a peripheral stalk is formed by the delta, b and b' chains.

The protein resides in the cell inner membrane. Its function is as follows. F(1)F(0) ATP synthase produces ATP from ADP in the presence of a proton or sodium gradient. F-type ATPases consist of two structural domains, F(1) containing the extramembraneous catalytic core and F(0) containing the membrane proton channel, linked together by a central stalk and a peripheral stalk. During catalysis, ATP synthesis in the catalytic domain of F(1) is coupled via a rotary mechanism of the central stalk subunits to proton translocation. This protein is part of the stalk that links CF(0) to CF(1). It either transmits conformational changes from CF(0) to CF(1) or is implicated in proton conduction. The protein is ATP synthase subunit delta of Rhodopseudomonas palustris (strain BisB5).